The chain runs to 1622 residues: ABC transporter C family member 1 (1622 aa).

9 helical membrane passes run 37 to 57 (FVLG…LWLI), 73 to 93 (FSYF…FRLV), 110 to 130 (EAFM…MTVV), 145 to 165 (FAVI…LSVK), 174 to 194 (YLYI…FVYF), 336 to 356 (AWIG…GVLC), 440 to 460 (VASI…TVII), 527 to 547 (FILN…FSLL), and 557 to 577 (FTSL…PNII). The ABC transmembrane type-1 1 domain occupies 302 to 582 (FWWGGFWKIG…LPNIITQMVN (281 aa)). Residues 614–838 (ISIRNGYFSW…GPLFQRLMEN (225 aa)) form the ABC transporter 1 domain. 649–656 (GSTGEGKT) is an ATP binding site. Residues 852 to 876 (AEVDQTSVKPVENGNANNLQKDGIE) are disordered. Over residues 855–871 (DQTSVKPVENGNANNLQ) the composition is skewed to polar residues. Helical transmembrane passes span 909–929 (ALGG…TQVF), 951–971 (PLFY…VTLI), 1027–1049 (AVFV…LIGI), 1053–1072 (LSLW…YLYY), 1138–1158 (LGIR…SLAV), and 1172–1192 (STMG…TAVL). Residues 916 to 1200 (VMMLVICYVL…VLRLASLAEN (285 aa)) form the ABC transmembrane type-1 2 domain. The interaction with calmodulin and FKP42/TWD1 stretch occupies residues 1231-1246 (WPSSGSIKFEDVVLRY). In terms of domain architecture, ABC transporter 2 spans 1237-1471 (IKFEDVVLRY…GESSFSKMVQ (235 aa)). Residue 1271-1278 (GRTGAGKS) coordinates ATP.

This sequence belongs to the ABC transporter superfamily. ABCC family. Conjugate transporter (TC 3.A.1.208) subfamily. As to quaternary structure, interacts with calmodulin (CaM), PAS1 and FKBP42/TWD1. Ubiquitous, with higher levels in leaves and stems and lower levels in roots. Localized in the root apex, root hair tips and root epidermis.

It is found in the vacuole membrane. The enzyme catalyses ATP + H2O + xenobioticSide 1 = ADP + phosphate + xenobioticSide 2.. Its function is as follows. Pump for glutathione S-conjugates. Mediates the transport of S-(2,4-dinitrophenyl)-glutathione (DNP-GS), GSSG, cyanidin 3-glucoside-GS (C3G-GS) and metolachlor-GS (MOC-GS). In Arabidopsis thaliana (Mouse-ear cress), this protein is ABC transporter C family member 1 (ABCC1).